The sequence spans 223 residues: Holliday junction branch migration complex subunit RuvA (223 aa).

A domain I region spans residues Met-1–Leu-64. The tract at residues Ser-65–Asp-143 is domain II. Positions Asp-144 to Arg-171 are flexible linker. The disordered stretch occupies residues Asp-148–Gln-177. Positions Pro-172–Glu-223 are domain III.

The protein belongs to the RuvA family. As to quaternary structure, homotetramer. Forms an RuvA(8)-RuvB(12)-Holliday junction (HJ) complex. HJ DNA is sandwiched between 2 RuvA tetramers; dsDNA enters through RuvA and exits via RuvB. An RuvB hexamer assembles on each DNA strand where it exits the tetramer. Each RuvB hexamer is contacted by two RuvA subunits (via domain III) on 2 adjacent RuvB subunits; this complex drives branch migration. In the full resolvosome a probable DNA-RuvA(4)-RuvB(12)-RuvC(2) complex forms which resolves the HJ.

It is found in the cytoplasm. Its function is as follows. The RuvA-RuvB-RuvC complex processes Holliday junction (HJ) DNA during genetic recombination and DNA repair, while the RuvA-RuvB complex plays an important role in the rescue of blocked DNA replication forks via replication fork reversal (RFR). RuvA specifically binds to HJ cruciform DNA, conferring on it an open structure. The RuvB hexamer acts as an ATP-dependent pump, pulling dsDNA into and through the RuvAB complex. HJ branch migration allows RuvC to scan DNA until it finds its consensus sequence, where it cleaves and resolves the cruciform DNA. This chain is Holliday junction branch migration complex subunit RuvA, found in Jannaschia sp. (strain CCS1).